We begin with the raw amino-acid sequence, 350 residues long: Phenylalanine--tRNA ligase alpha subunit (350 aa).

A Mg(2+)-binding site is contributed by E259.

This sequence belongs to the class-II aminoacyl-tRNA synthetase family. Phe-tRNA synthetase alpha subunit type 1 subfamily. As to quaternary structure, tetramer of two alpha and two beta subunits. It depends on Mg(2+) as a cofactor.

It localises to the cytoplasm. It catalyses the reaction tRNA(Phe) + L-phenylalanine + ATP = L-phenylalanyl-tRNA(Phe) + AMP + diphosphate + H(+). The chain is Phenylalanine--tRNA ligase alpha subunit (pheS) from Rickettsia prowazekii (strain Madrid E).